Reading from the N-terminus, the 72-residue chain is SRY-related protein AES6 (72 aa).

A DNA-binding region (HMG box) is located at residues 1-69 (VKRPMNAFMV…KHMADYPDYK (69 aa)).

It localises to the nucleus. In Alligator mississippiensis (American alligator), this protein is SRY-related protein AES6.